Consider the following 149-residue polypeptide: 3-hydroxyacyl-[acyl-carrier-protein] dehydratase FabZ (149 aa).

His-53 is a catalytic residue.

Belongs to the thioester dehydratase family. FabZ subfamily.

The protein localises to the cytoplasm. The enzyme catalyses a (3R)-hydroxyacyl-[ACP] = a (2E)-enoyl-[ACP] + H2O. In terms of biological role, involved in unsaturated fatty acids biosynthesis. Catalyzes the dehydration of short chain beta-hydroxyacyl-ACPs and long chain saturated and unsaturated beta-hydroxyacyl-ACPs. In Neisseria meningitidis serogroup B (strain ATCC BAA-335 / MC58), this protein is 3-hydroxyacyl-[acyl-carrier-protein] dehydratase FabZ.